Here is a 666-residue protein sequence, read N- to C-terminus: SNARE-interacting protein KEULE (666 aa).

The stretch at 340–377 forms a coiled coil; the sequence is KNKAAQLQGKRDGAELSTRDLQKMVQALPQYSEQIDKL. The segment at 534 to 589 is disordered; it reads KEDFPCMNDPSPSFHGSTSLSSAASSSQGQAAQSMRSRRTPTWAKPRGSDDGYSSD. Positions 550–568 are enriched in low complexity; that stretch reads STSLSSAASSSQGQAAQSM.

The protein belongs to the STXBP/unc-18/SEC1 family. In terms of assembly, binds the syntaxin KNOLLE. Interacts with SEC6. As to expression, expressed throughout the plant, both in mitotically active and quiescent cells. Enriched in dividing tissues.

The protein localises to the cytoplasm. It is found in the membrane. Its subcellular location is the cytoskeleton. It localises to the phragmoplast. In terms of biological role, regulator of vesicle trafficking involved in cytokinesis and root hair development, but not required for cell elongation. The protein is SNARE-interacting protein KEULE (KEU) of Arabidopsis thaliana (Mouse-ear cress).